The chain runs to 172 residues: Molybdopterin synthase catalytic subunit (172 aa).

The residue at position 20 (Ser20) is a Phosphoserine. Substrate contacts are provided by residues His127–Arg128, Lys143, and Lys150–Glu152.

The protein belongs to the MoaE family. MOCS2B subfamily. In terms of assembly, heterotetramer; composed of 2 small (MOCS2A) and 2 large (MOCS2B) subunits.

It localises to the cytoplasm. The protein resides in the cytosol. It catalyses the reaction 2 [molybdopterin-synthase sulfur-carrier protein]-C-terminal-Gly-aminoethanethioate + cyclic pyranopterin phosphate + H2O = molybdopterin + 2 [molybdopterin-synthase sulfur-carrier protein]-C-terminal Gly-Gly + 2 H(+). It participates in cofactor biosynthesis; molybdopterin biosynthesis. Functionally, catalytic subunit of the molybdopterin synthase complex, a complex that catalyzes the conversion of precursor Z into molybdopterin. Acts by mediating the incorporation of 2 sulfur atoms from thiocarboxylated MOCS2A into precursor Z to generate a dithiolene group. This Pongo abelii (Sumatran orangutan) protein is Molybdopterin synthase catalytic subunit.